The primary structure comprises 151 residues: MSSTILVIHGPNLNLLGKREPEVYGHLTLDNINRQLIAQAEQASITLDTFQSNWEGAIVDRIHQAQTEGVKLIIINPAALTHTSVALRDALLGVAIPFIEVHLSNVHAREAFRHHSYLSDKAIGVICGLGAKGYSFALDYAIEKIQPSNPN.

Tyr24 functions as the Proton acceptor in the catalytic mechanism. The substrate site is built by Asn76, His82, and Asp89. Catalysis depends on His102, which acts as the Proton donor. Substrate-binding positions include 103-104 and Arg113; that span reads LS.

This sequence belongs to the type-II 3-dehydroquinase family. In terms of assembly, homododecamer.

It catalyses the reaction 3-dehydroquinate = 3-dehydroshikimate + H2O. Its pathway is metabolic intermediate biosynthesis; chorismate biosynthesis; chorismate from D-erythrose 4-phosphate and phosphoenolpyruvate: step 3/7. Catalyzes a trans-dehydration via an enolate intermediate. This chain is 3-dehydroquinate dehydratase, found in Acinetobacter baumannii (strain ATCC 17978 / DSM 105126 / CIP 53.77 / LMG 1025 / NCDC KC755 / 5377).